The primary structure comprises 475 residues: UDP-N-acetylmuramate--L-alanine ligase (475 aa).

ATP is bound at residue 112–118 (GTHGKTT).

It belongs to the MurCDEF family.

Its subcellular location is the cytoplasm. It carries out the reaction UDP-N-acetyl-alpha-D-muramate + L-alanine + ATP = UDP-N-acetyl-alpha-D-muramoyl-L-alanine + ADP + phosphate + H(+). It participates in cell wall biogenesis; peptidoglycan biosynthesis. Functionally, cell wall formation. The chain is UDP-N-acetylmuramate--L-alanine ligase from Cupriavidus pinatubonensis (strain JMP 134 / LMG 1197) (Cupriavidus necator (strain JMP 134)).